The following is a 389-amino-acid chain: MGAPTQIPIETSPLAWLDAVERQRRDAGLRRSLRPRPPVGTELDLASNDYLGLSQHPDVIEGGVQALRIWGAGATGSRLVTGDTELHQQLEAELAEYVGAAAGLLFSSGYTANLGAVVGLSGPGSLLVSDAYSHASLVDACRLSRARVVVTPHRDVAAVDAALASRDEQRAMVITDSVFSADGTLAPLRELLAACRRHRALLVIDEAHGLGVRGGGRGLLHELGLAGAPDVVLTTTLSKALGSQGGAVLGPAAVRAHLIDAARPFIFDTGLAPAAVGAARAALGVLKAEQWRPDAVLQNARELADICDVPETPQSAVVSVLLGDPEVALAAAAACLDAGVKVGCFRPPTVPAGTSRLRLTARASLSPDEMELARRVLTDVLLGPAAARR.

Arg31 is a binding site for substrate. 109 to 110 serves as a coordination point for pyridoxal 5'-phosphate; it reads GY. Substrate is bound at residue His134. Pyridoxal 5'-phosphate-binding positions include Ser180, 205 to 208, and 236 to 239; these read DEAH and TLSK. At Lys239 the chain carries N6-(pyridoxal phosphate)lysine. Thr349 lines the substrate pocket.

The protein belongs to the class-II pyridoxal-phosphate-dependent aminotransferase family. BioF subfamily. In terms of assembly, homodimer. Pyridoxal 5'-phosphate serves as cofactor.

The enzyme catalyses 6-carboxyhexanoyl-[ACP] + L-alanine + H(+) = (8S)-8-amino-7-oxononanoate + holo-[ACP] + CO2. It functions in the pathway cofactor biosynthesis; biotin biosynthesis. Its function is as follows. Catalyzes the decarboxylative condensation of pimeloyl-[acyl-carrier protein] and L-alanine to produce 8-amino-7-oxononanoate (AON), [acyl-carrier protein], and carbon dioxide. This chain is 8-amino-7-oxononanoate synthase, found in Mycobacterium marinum (strain ATCC BAA-535 / M).